The chain runs to 64 residues: Large ribosomal subunit protein bL32 (64 aa).

The segment at 1-35 (MAVQKSRVTPSRRGQRRSHDALTAKQLSTDPTSGE) is disordered.

This sequence belongs to the bacterial ribosomal protein bL32 family.

This chain is Large ribosomal subunit protein bL32, found in Xanthomonas axonopodis pv. citri (strain 306).